A 176-amino-acid polypeptide reads, in one-letter code: Translation initiation factor IF-3 (176 aa).

It belongs to the IF-3 family. Monomer.

The protein resides in the cytoplasm. In terms of biological role, IF-3 binds to the 30S ribosomal subunit and shifts the equilibrium between 70S ribosomes and their 50S and 30S subunits in favor of the free subunits, thus enhancing the availability of 30S subunits on which protein synthesis initiation begins. In Rippkaea orientalis (strain PCC 8801 / RF-1) (Cyanothece sp. (strain PCC 8801)), this protein is Translation initiation factor IF-3.